A 222-amino-acid polypeptide reads, in one-letter code: Endonuclease V (222 aa).

Mg(2+) contacts are provided by aspartate 34 and aspartate 102.

It belongs to the endonuclease V family. Mg(2+) serves as cofactor.

It localises to the cytoplasm. The catalysed reaction is Endonucleolytic cleavage at apurinic or apyrimidinic sites to products with a 5'-phosphate.. Functionally, DNA repair enzyme involved in the repair of deaminated bases. Selectively cleaves double-stranded DNA at the second phosphodiester bond 3' to a deoxyinosine leaving behind the intact lesion on the nicked DNA. The chain is Endonuclease V from Photorhabdus laumondii subsp. laumondii (strain DSM 15139 / CIP 105565 / TT01) (Photorhabdus luminescens subsp. laumondii).